The following is a 207-amino-acid chain: Small ribosomal subunit protein uS4 (207 aa).

The interval 31-56 (KCKLDSKPGQHGRTSGARTSDYGNQL) is disordered. Residues 42–53 (GRTSGARTSDYG) show a composition bias toward polar residues. An S4 RNA-binding domain is found at 97-157 (TRLDNVVYRM…EKSKKQVRIV (61 aa)).

It belongs to the universal ribosomal protein uS4 family. In terms of assembly, part of the 30S ribosomal subunit. Contacts protein S5. The interaction surface between S4 and S5 is involved in control of translational fidelity.

Its function is as follows. One of the primary rRNA binding proteins, it binds directly to 16S rRNA where it nucleates assembly of the body of the 30S subunit. Functionally, with S5 and S12 plays an important role in translational accuracy. This Herminiimonas arsenicoxydans protein is Small ribosomal subunit protein uS4.